The chain runs to 203 residues: Dephospho-CoA kinase (203 aa).

The DPCK domain maps to 3-201 (SVGLTGGIGS…QRYLGYAAAA (199 aa)). 11–16 (GSGKTT) provides a ligand contact to ATP.

The protein belongs to the CoaE family.

It localises to the cytoplasm. The catalysed reaction is 3'-dephospho-CoA + ATP = ADP + CoA + H(+). The protein operates within cofactor biosynthesis; coenzyme A biosynthesis; CoA from (R)-pantothenate: step 5/5. In terms of biological role, catalyzes the phosphorylation of the 3'-hydroxyl group of dephosphocoenzyme A to form coenzyme A. The sequence is that of Dephospho-CoA kinase from Burkholderia thailandensis (strain ATCC 700388 / DSM 13276 / CCUG 48851 / CIP 106301 / E264).